Consider the following 227-residue polypeptide: Pyridoxal 5'-phosphate synthase subunit PdxT (227 aa).

52–54 (GES) provides a ligand contact to L-glutamine. C84 acts as the Nucleophile in catalysis. L-glutamine-binding positions include R118 and 149 to 150 (IR). Active-site charge relay system residues include H189 and E191.

The protein belongs to the glutaminase PdxT/SNO family. In the presence of PdxS, forms a dodecamer of heterodimers. Only shows activity in the heterodimer.

It catalyses the reaction aldehydo-D-ribose 5-phosphate + D-glyceraldehyde 3-phosphate + L-glutamine = pyridoxal 5'-phosphate + L-glutamate + phosphate + 3 H2O + H(+). It carries out the reaction L-glutamine + H2O = L-glutamate + NH4(+). It participates in cofactor biosynthesis; pyridoxal 5'-phosphate biosynthesis. In terms of biological role, catalyzes the hydrolysis of glutamine to glutamate and ammonia as part of the biosynthesis of pyridoxal 5'-phosphate. The resulting ammonia molecule is channeled to the active site of PdxS. In Renibacterium salmoninarum (strain ATCC 33209 / DSM 20767 / JCM 11484 / NBRC 15589 / NCIMB 2235), this protein is Pyridoxal 5'-phosphate synthase subunit PdxT.